Here is a 306-residue protein sequence, read N- to C-terminus: Probable protein ABIL1 (306 aa).

Residues 200–236 form a disordered region; the sequence is KNSKTNGARQSEFVLEETKATKPASRGKEPSTSPLPK.

This sequence belongs to the ABI family. Binds SCAR.

It localises to the cytoplasm. It is found in the cytoskeleton. Its function is as follows. Involved in regulation of actin and microtubule organization. Part of a WAVE complex that activates the Arp2/3 complex. This chain is Probable protein ABIL1, found in Oryza sativa subsp. japonica (Rice).